Reading from the N-terminus, the 430-residue chain is Serine--tRNA ligase (430 aa).

235 to 237 (TAE) serves as a coordination point for L-serine. ATP contacts are provided by residues 266-268 (RRE) and Val-282. Residue Glu-289 participates in L-serine binding. 353-356 (EASS) contributes to the ATP binding site. Ser-389 is an L-serine binding site.

This sequence belongs to the class-II aminoacyl-tRNA synthetase family. Type-1 seryl-tRNA synthetase subfamily. Homodimer. The tRNA molecule binds across the dimer.

Its subcellular location is the cytoplasm. It catalyses the reaction tRNA(Ser) + L-serine + ATP = L-seryl-tRNA(Ser) + AMP + diphosphate + H(+). The enzyme catalyses tRNA(Sec) + L-serine + ATP = L-seryl-tRNA(Sec) + AMP + diphosphate + H(+). The protein operates within aminoacyl-tRNA biosynthesis; selenocysteinyl-tRNA(Sec) biosynthesis; L-seryl-tRNA(Sec) from L-serine and tRNA(Sec): step 1/1. Functionally, catalyzes the attachment of serine to tRNA(Ser). Is also able to aminoacylate tRNA(Sec) with serine, to form the misacylated tRNA L-seryl-tRNA(Sec), which will be further converted into selenocysteinyl-tRNA(Sec). This is Serine--tRNA ligase from Chlorobium luteolum (strain DSM 273 / BCRC 81028 / 2530) (Pelodictyon luteolum).